A 534-amino-acid chain; its full sequence is Peptide chain release factor 3 (534 aa).

Residues 9-278 (ARRRTFAIIS…FFVEHAPPPQ (270 aa)) form the tr-type G domain. Residues 18-25 (SHPDAGKT), 86-90 (DTPGH), and 140-143 (NKLD) each bind GTP.

It belongs to the TRAFAC class translation factor GTPase superfamily. Classic translation factor GTPase family. PrfC subfamily.

Its subcellular location is the cytoplasm. Functionally, increases the formation of ribosomal termination complexes and stimulates activities of RF-1 and RF-2. It binds guanine nucleotides and has strong preference for UGA stop codons. It may interact directly with the ribosome. The stimulation of RF-1 and RF-2 is significantly reduced by GTP and GDP, but not by GMP. In Xanthomonas axonopodis pv. citri (strain 306), this protein is Peptide chain release factor 3.